The primary structure comprises 432 residues: UDP-glucose 6-dehydrogenase (432 aa).

NAD(+)-binding positions include 2 to 19, Val11, Asp30, Lys35, Thr121, and Glu152; that span reads NITFIGSGYVGLVSGIIM. Substrate contacts are provided by residues 148–152, Lys202, Asn206, 247–251, and Gly255; these read EFLRE and FLNAG. Catalysis depends on Cys258, which acts as the Nucleophile. Lys261 serves as a coordination point for NAD(+). Lys319 provides a ligand contact to substrate. Residue Arg326 participates in NAD(+) binding.

This sequence belongs to the UDP-glucose/GDP-mannose dehydrogenase family.

It catalyses the reaction UDP-alpha-D-glucose + 2 NAD(+) + H2O = UDP-alpha-D-glucuronate + 2 NADH + 3 H(+). It participates in nucleotide-sugar biosynthesis; UDP-alpha-D-glucuronate biosynthesis; UDP-alpha-D-glucuronate from UDP-alpha-D-glucose: step 1/1. This chain is UDP-glucose 6-dehydrogenase (udg), found in Rickettsia conorii (strain ATCC VR-613 / Malish 7).